The primary structure comprises 651 residues: Acetyl-coenzyme A synthetase (651 aa).

Residues 190–193 (RRGK) and threonine 311 contribute to the CoA site. Residues 387 to 389 (GEP), 411 to 416 (DTWWQT), aspartate 508, and arginine 523 each bind ATP. Serine 531 contributes to the CoA binding site. An ATP-binding site is contributed by arginine 534. Mg(2+) is bound by residues valine 545, histidine 547, and valine 550. Lysine 617 carries the post-translational modification N6-acetyllysine.

It belongs to the ATP-dependent AMP-binding enzyme family. Mg(2+) is required as a cofactor. In terms of processing, acetylated. Deacetylation by the SIR2-homolog deacetylase activates the enzyme.

It carries out the reaction acetate + ATP + CoA = acetyl-CoA + AMP + diphosphate. Functionally, catalyzes the conversion of acetate into acetyl-CoA (AcCoA), an essential intermediate at the junction of anabolic and catabolic pathways. AcsA undergoes a two-step reaction. In the first half reaction, AcsA combines acetate with ATP to form acetyl-adenylate (AcAMP) intermediate. In the second half reaction, it can then transfer the acetyl group from AcAMP to the sulfhydryl group of CoA, forming the product AcCoA. M.tuberculosis may use AcsA for both acetate and propionate assimilation. This Mycobacterium tuberculosis (strain CDC 1551 / Oshkosh) protein is Acetyl-coenzyme A synthetase.